The chain runs to 344 residues: Methionine import ATP-binding protein MetN (344 aa).

The region spanning 2-241 (IELKNIGKQF…PTTQLAQQFI (240 aa)) is the ABC transporter domain. 38–45 (GASGAGKS) provides a ligand contact to ATP.

This sequence belongs to the ABC transporter superfamily. Methionine importer (TC 3.A.1.24) family. In terms of assembly, the complex is composed of two ATP-binding proteins (MetN), two transmembrane proteins (MetI) and a solute-binding protein (MetQ).

Its subcellular location is the cell inner membrane. The catalysed reaction is L-methionine(out) + ATP + H2O = L-methionine(in) + ADP + phosphate + H(+). It carries out the reaction D-methionine(out) + ATP + H2O = D-methionine(in) + ADP + phosphate + H(+). Functionally, part of the ABC transporter complex MetNIQ involved in methionine import. Responsible for energy coupling to the transport system. This chain is Methionine import ATP-binding protein MetN, found in Haemophilus ducreyi (strain 35000HP / ATCC 700724).